We begin with the raw amino-acid sequence, 543 residues long: EH domain-containing protein 2 (543 aa).

The residue at position 3 (Ser-3) is a Phosphoserine. The Dynamin-type G domain occupies Phe-55–Pro-286. Residues Gly-65 to Thr-72 are G1 motif. Gly-65–Thr-72 is a binding site for ATP. Residues Glu-91 to Pro-92 form a G2 motif region. A KPF loop; caveolar targeting motif is present at residues Lys-120 to Phe-122. A G3 motif region spans residues Asp-153–Gly-156. Residues Asn-219–Asp-222 are G4 motif. Lys-220 serves as a coordination point for ATP. Position 243 (Val-243) is a region of interest, G5 motif. Trp-258 contacts ATP. The interval Ser-320 to Ala-340 is mediates membrane-binding. Residues Ser-438, Ser-468, Ser-470, Ser-484, and Ser-493 each carry the phosphoserine modification. An EH domain is found at Asp-449–Arg-537. The 36-residue stretch at Leu-481–Lys-516 folds into the EF-hand domain. The Ca(2+) site is built by Asp-494, Asp-496, Asp-498, Met-500, and Glu-505. The disordered stretch occupies residues Pro-523–Glu-543. A compositionally biased stretch (basic residues) spans Ser-534–Glu-543.

Belongs to the TRAFAC class dynamin-like GTPase superfamily. Dynamin/Fzo/YdjA family. EHD subfamily. Homodimer and homooligomer. Interacts with EHD1. May also interact with EHD3 and EHD4. Interacts with MYOF. Interacts with EHBP1. Interacts with FER1L5 (via second C2 domain). Interacts with CAV1 in a cholesterol-dependent manner. Interacts (via EH domain) with PACSIN2 (via NPF motifs); this interaction probably stabilizes the caveolae. Highly expressed in heart and moderately expressed in placenta, lung, and skeletal muscle.

The protein localises to the cell membrane. Its subcellular location is the membrane. It is found in the caveola. The protein resides in the endosome membrane. It localises to the cytoplasm. The protein localises to the cytosol. Its activity is regulated as follows. The very low intrinsic ATPase activity is increased upon interaction with liposomes. In terms of biological role, ATP- and membrane-binding protein that controls membrane reorganization/tubulation upon ATP hydrolysis. Plays a role in membrane trafficking between the plasma membrane and endosomes. Important for the internalization of GLUT4. Required for fusion of myoblasts to skeletal muscle myotubes. Required for normal translocation of FER1L5 to the plasma membrane. Regulates the equilibrium between cell surface-associated and cell surface-dissociated caveolae by constraining caveolae at the cell membrane. The chain is EH domain-containing protein 2 from Homo sapiens (Human).